The chain runs to 118 residues: uncharacterized protein (118 aa).

This is an uncharacterized protein from Rickettsia prowazekii (strain Madrid E).